Consider the following 413-residue polypeptide: Probable protein phosphatase 2C 78 (413 aa).

Residues 21–40 (KKATTTTRRRERSSSQAARR) are disordered. Positions 111-409 (KYGVASVCGR…DNVSVVVVDL (299 aa)) constitute a PPM-type phosphatase domain. 4 residues coordinate Mn(2+): Asp153, Gly154, Asp327, and Asp400.

Belongs to the PP2C family. Mg(2+) serves as cofactor. Mn(2+) is required as a cofactor.

The protein localises to the golgi apparatus. Its subcellular location is the nucleus. It carries out the reaction O-phospho-L-seryl-[protein] + H2O = L-seryl-[protein] + phosphate. It catalyses the reaction O-phospho-L-threonyl-[protein] + H2O = L-threonyl-[protein] + phosphate. In terms of biological role, acts as a negative regulator of abscisic acid (ABA) signaling for stomatal closure in leaves, and controls water loss during leaf senescence. Activated by the NAC029/NAP transcription factor during ABA signaling in senescing leaves. Functions as a negative regulator of osmotic stress and ABA signaling. Acts as a negative regulator of response to drought. In Arabidopsis thaliana (Mouse-ear cress), this protein is Probable protein phosphatase 2C 78.